A 306-amino-acid chain; its full sequence is Recombination-associated protein RdgC (306 aa).

It belongs to the RdgC family.

Its subcellular location is the cytoplasm. The protein resides in the nucleoid. Functionally, may be involved in recombination. The chain is Recombination-associated protein RdgC from Pseudomonas putida (strain ATCC 47054 / DSM 6125 / CFBP 8728 / NCIMB 11950 / KT2440).